A 103-amino-acid chain; its full sequence is Large ribosomal subunit protein bL21 (103 aa).

Belongs to the bacterial ribosomal protein bL21 family. In terms of assembly, part of the 50S ribosomal subunit. Contacts protein L20.

Its function is as follows. This protein binds to 23S rRNA in the presence of protein L20. This Legionella pneumophila (strain Lens) protein is Large ribosomal subunit protein bL21.